We begin with the raw amino-acid sequence, 463 residues long: tRNA dimethylallyltransferase 9 (463 aa).

57–64 (GPTGAGKS) is an ATP binding site. 59-64 (TGAGKS) is a binding site for substrate. An interaction with substrate tRNA region spans residues 82-85 (DSVQ).

Belongs to the IPP transferase family. Requires Mg(2+) as cofactor. In terms of tissue distribution, expressed ubiquitously, with highest expression in proliferating tissues.

It localises to the cytoplasm. The enzyme catalyses adenosine(37) in tRNA + dimethylallyl diphosphate = N(6)-dimethylallyladenosine(37) in tRNA + diphosphate. Its function is as follows. Catalyzes the transfer of a dimethylallyl group onto the adenine at position 37 in tRNAs that read codons beginning with uridine, leading to the formation of N6-(dimethylallyl)adenosine (i(6)A). Involved in the cis-type cytokinin biosynthesis. This is tRNA dimethylallyltransferase 9 (IPT9) from Arabidopsis thaliana (Mouse-ear cress).